Reading from the N-terminus, the 197-residue chain is Beta-crystallin A2 (197 aa).

An N-terminal arm region spans residues 1–11 (MSSAPAPGSAP). Beta/gamma crystallin 'Greek key' domains follow at residues 12-52 (VCLT…KVEN) and 53-99 (GAWV…RPVL). Residues 100–105 (CANHSD) are connecting peptide. 2 consecutive Beta/gamma crystallin 'Greek key' domains span residues 106–147 (SRVT…KVSS) and 148–196 (GAWV…RRVQ).

Belongs to the beta/gamma-crystallin family. Homo/heterodimer, or complexes of higher-order. The structure of beta-crystallin oligomers seems to be stabilized through interactions between the N-terminal arms.

Its function is as follows. Crystallins are the dominant structural components of the vertebrate eye lens. The protein is Beta-crystallin A2 (Cryba2) of Mus musculus (Mouse).